Here is a 464-residue protein sequence, read N- to C-terminus: DNA repair protein KRE29 (464 aa).

The tract at residues 1-69 is disordered; that stretch reads MGSVNSSPNE…SDEEFSSLEN (69 aa). Acidic residues predominate over residues 53 to 65; sequence PENDSLNSDEEFS. A phosphoserine mark is found at S81 and S101.

In terms of assembly, component of the Smc5-Smc6 complex which consists of KRE29, MMS21, NSE1, NSE3, NSE4, NSE5, SMC5 and SMC6. Interacts with NSE5.

It is found in the nucleus. The protein resides in the cytoplasm. Its function is as follows. Acts in a DNA repair pathway for removal of UV-induced DNA damage that is distinct from classical nucleotide excision repair and in repair of ionizing radiation damage. Functions in homologous recombination repair of DNA double strand breaks and in recovery of stalled replication forks. The polypeptide is DNA repair protein KRE29 (KRE29) (Saccharomyces cerevisiae (strain ATCC 204508 / S288c) (Baker's yeast)).